The following is a 203-amino-acid chain: MAFLNQDGDKYTSAKDDGTGNPITAVSIERSTVPLEVGLNNDQPLNVNVANTALDVNITNTASVPVLVKNTAAIKTQVQKSYSEFVVTDADTVATGATKSYTVDLIDSLGVFRTYGVAMYTTQTDSSNSKVLASIYSVPKNIPFYSATTSGNDNSVLFNSIVFVQNYPLQKQLTFTAPKIHLTVKAAGTVDLTGLKIVVWGME.

Residues 1 to 23 (MAFLNQDGDKYTSAKDDGTGNPI) are disordered. A compositionally biased stretch (basic and acidic residues) spans 7–18 (DGDKYTSAKDDG).

The sequence is that of SPbeta prophage-derived uncharacterized protein YouA (youA) from Bacillus subtilis (strain 168).